The primary structure comprises 148 residues: Protein PLANT CADMIUM RESISTANCE 9 (148 aa).

The helical transmembrane segment at 59-78 threads the bilayer; that stretch reads LAGLMVVAMSSIGCGWYYAS.

Belongs to the cornifelin family.

It is found in the membrane. In terms of biological role, may be involved in cadmium resistance. The protein is Protein PLANT CADMIUM RESISTANCE 9 (PCR9) of Arabidopsis thaliana (Mouse-ear cress).